The sequence spans 225 residues: ATP synthase subunit a (225 aa).

The next 6 membrane-spanning stretches (helical) occupy residues 18-38 (LSLN…MFWL), 73-93 (ILIS…FPYI), 100-120 (MTLT…FGWI), 126-146 (MFTH…MVLI), 156-176 (GTLA…LTLL), and 187-207 (IMLF…AVAM).

The protein belongs to the ATPase A chain family. As to quaternary structure, F-type ATPases have 2 components, CF(1) - the catalytic core - and CF(0) - the membrane proton channel. CF(1) has five subunits: alpha(3), beta(3), gamma(1), delta(1), epsilon(1). CF(0) has three main subunits: a, b and c.

It localises to the mitochondrion inner membrane. Functionally, mitochondrial membrane ATP synthase (F(1)F(0) ATP synthase or Complex V) produces ATP from ADP in the presence of a proton gradient across the membrane which is generated by electron transport complexes of the respiratory chain. F-type ATPases consist of two structural domains, F(1) - containing the extramembraneous catalytic core and F(0) - containing the membrane proton channel, linked together by a central stalk and a peripheral stalk. During catalysis, ATP synthesis in the catalytic domain of F(1) is coupled via a rotary mechanism of the central stalk subunits to proton translocation. Key component of the proton channel; it may play a direct role in the translocation of protons across the membrane. This chain is ATP synthase subunit a (ATP6), found in Locusta migratoria (Migratory locust).